Here is a 678-residue protein sequence, read N- to C-terminus: Zinc finger protein 334 (678 aa).

The 72-residue stretch at 8–79 folds into the KRAB domain; it reads VSFQDLTVNF…EEFSNQNYPE (72 aa). 14 C2H2-type zinc fingers span residues 235-257, 263-285, 291-313, 319-341, 347-369, 375-397, 403-425, 431-453, 459-481, 542-564, 570-592, 598-620, 626-648, and 654-676; these read NEPC…QRIH, YVCN…QRIH, YECS…QKIH, YECN…FRSH, YECK…QRTH, NECK…QRIH, YECS…RRSH, YECS…QITH, YECN…QRTH, YERN…RRIH, YECN…QKIH, and YECN…QKSH.

It belongs to the krueppel C2H2-type zinc-finger protein family.

The protein localises to the nucleus. Functionally, may be involved in transcriptional regulation. The protein is Zinc finger protein 334 (ZNF334) of Pongo abelii (Sumatran orangutan).